The sequence spans 195 residues: Large ribosomal subunit protein uL5 (195 aa).

This sequence belongs to the universal ribosomal protein uL5 family. Part of the 50S ribosomal subunit; part of the 5S rRNA/L5/L18/L25 subcomplex. Contacts the 5S rRNA and the P site tRNA. Forms a bridge to the 30S subunit in the 70S ribosome.

This is one of the proteins that bind and probably mediate the attachment of the 5S RNA into the large ribosomal subunit, where it forms part of the central protuberance. In the 70S ribosome it contacts protein S13 of the 30S subunit (bridge B1b), connecting the 2 subunits; this bridge is implicated in subunit movement. Contacts the P site tRNA; the 5S rRNA and some of its associated proteins might help stabilize positioning of ribosome-bound tRNAs. The chain is Large ribosomal subunit protein uL5 from Pelodictyon phaeoclathratiforme (strain DSM 5477 / BU-1).